The sequence spans 385 residues: Isocitrate dehydrogenase [NAD] subunit beta, mitochondrial (385 aa).

The transit peptide at 1 to 34 (MAALSGVRWLTRALVSAGNPGAWRGLSTSAAAHA) directs the protein to the mitochondrion. At K199 the chain carries N6-acetyllysine.

It belongs to the isocitrate and isopropylmalate dehydrogenases family. Heterooligomer of subunits alpha (IDH3A), beta (IDH3B), and gamma (IDH3G) in the apparent ratio of 2:1:1. The heterodimer containing one IDH3A and one IDH3B subunit and the heterodimer containing one IDH3A and one IDH3G subunit assemble into a heterotetramer (which contains two subunits of IDH3A, one of IDH3B and one of IDH3G) and further into the heterooctamer.

Its subcellular location is the mitochondrion. Its activity is regulated as follows. The heterotetramer and the heterodimer composed of IDH3A and IDH3G subunits can be allosterically activated by citrate (CIT) or/and ADP, and the two activators can act independently or synergistically. The heterodimer composed of IDH3A and IDH3B subunits cannot be allosterically regulated and the allosteric regulation of the heterotetramer is through the IDH3G subunit and not the IDH3B subunit. The IDH3G subunit contains the allosteric site which consists of a CIT-binding site and an ADP-binding site, and the binding of CIT and ADP causes conformational changes at the allosteric site which are transmitted to the active site in the catalytic subunit (IDH3A) through a cascade of conformational changes at the heterodimer interface, leading to stabilization of the isocitrate-binding at the active site and thus activation of the enzyme. ATP can activate the heterotetramer and the heterodimer composed of IDH3A and IDH3G subunits at low concentrations but inhibits their activities at high concentrations, whereas ATP exhibits only inhibitory effect on the heterodimer composed of IDH3A and IDH3B subunits. In terms of biological role, plays a structural role to facilitate the assembly and ensure the full activity of the enzyme catalyzing the decarboxylation of isocitrate (ICT) into alpha-ketoglutarate. The heterodimer composed of the alpha (IDH3A) and beta (IDH3B) subunits and the heterodimer composed of the alpha (IDH3A) and gamma (IDH3G) subunits, have considerable basal activity but the full activity of the heterotetramer (containing two subunits of IDH3A, one of IDH3B and one of IDH3G) requires the assembly and cooperative function of both heterodimers. The polypeptide is Isocitrate dehydrogenase [NAD] subunit beta, mitochondrial (IDH3B) (Homo sapiens (Human)).